A 211-amino-acid polypeptide reads, in one-letter code: Large ribosomal subunit protein uL4 (211 aa).

The segment at 63–94 (RFGRQKGGGTARHGARSAPQFVGGGKAHGPRV) is disordered.

The protein belongs to the universal ribosomal protein uL4 family. As to quaternary structure, part of the 50S ribosomal subunit.

Functionally, one of the primary rRNA binding proteins, this protein initially binds near the 5'-end of the 23S rRNA. It is important during the early stages of 50S assembly. It makes multiple contacts with different domains of the 23S rRNA in the assembled 50S subunit and ribosome. Forms part of the polypeptide exit tunnel. The polypeptide is Large ribosomal subunit protein uL4 (Maricaulis maris (strain MCS10) (Caulobacter maris)).